The chain runs to 131 residues: Profilin-5 (131 aa).

The cysteines at positions 13 and 115 are disulfide-linked. Positions 81–97 (AVIRGKKGAGGITVKKT) match the Involved in PIP2 interaction motif. Phosphothreonine is present on Thr111.

The protein belongs to the profilin family. In terms of assembly, occurs in many kinds of cells as a complex with monomeric actin in a 1:1 ratio. Post-translationally, phosphorylated by MAP kinases.

Its subcellular location is the cytoplasm. It localises to the cytoskeleton. Its function is as follows. Binds to actin and affects the structure of the cytoskeleton. At high concentrations, profilin prevents the polymerization of actin, whereas it enhances it at low concentrations. This is Profilin-5 from Corylus avellana (European hazel).